Reading from the N-terminus, the 175-residue chain is Ribulose bisphosphate carboxylase small subunit, chloroplastic 2 (175 aa).

The transit peptide at 1-46 (MAPTVMASSATSVAPFQGLKSTAGLPVSRRSTNSGFGNVSNGGRIK) directs the protein to the chloroplast.

It belongs to the RuBisCO small chain family. Heterohexadecamer of 8 large and 8 small subunits.

The protein localises to the plastid. It localises to the chloroplast. Functionally, ruBisCO catalyzes two reactions: the carboxylation of D-ribulose 1,5-bisphosphate, the primary event in carbon dioxide fixation, as well as the oxidative fragmentation of the pentose substrate. Both reactions occur simultaneously and in competition at the same active site. Although the small subunit is not catalytic it is essential for maximal activity. The polypeptide is Ribulose bisphosphate carboxylase small subunit, chloroplastic 2 (Oryza sativa subsp. japonica (Rice)).